A 540-amino-acid polypeptide reads, in one-letter code: Malolactic enzyme (540 aa).

The active-site Proton donor is Tyr90. Lys163 (proton acceptor) is an active-site residue. Lys163 serves as a coordination point for substrate. Residues Glu234, Asp235, and Asp258 each contribute to the Mn(2+) site. NAD(+) contacts are provided by residues 291-294, Asn403, and Asn448; that span reads GGSA. Asn448 is a binding site for substrate.

Belongs to the malic enzymes family. As to quaternary structure, homodimer. Mn(2+) is required as a cofactor. NAD(+) serves as cofactor.

The catalysed reaction is (S)-malate + H(+) = (S)-lactate + CO2. Functionally, involved in the malolactic fermentation (MLF) of wine, which results in a natural decrease in acidity and favorable changes in wine flavors. Catalyzes the decarboxylation of L-malate to L-lactate. The sequence is that of Malolactic enzyme from Lactococcus lactis subsp. lactis (strain IL1403) (Streptococcus lactis).